A 162-amino-acid chain; its full sequence is Ribosomal RNA large subunit methyltransferase H (162 aa).

S-adenosyl-L-methionine-binding positions include leucine 78, glycine 109, and 128–133; that span reads LSALTL.

It belongs to the RNA methyltransferase RlmH family. Homodimer.

The protein localises to the cytoplasm. The enzyme catalyses pseudouridine(1915) in 23S rRNA + S-adenosyl-L-methionine = N(3)-methylpseudouridine(1915) in 23S rRNA + S-adenosyl-L-homocysteine + H(+). Specifically methylates the pseudouridine at position 1915 (m3Psi1915) in 23S rRNA. The chain is Ribosomal RNA large subunit methyltransferase H from Psychrobacter cryohalolentis (strain ATCC BAA-1226 / DSM 17306 / VKM B-2378 / K5).